A 2038-amino-acid polypeptide reads, in one-letter code: HEAT repeat-containing protein 5A (2038 aa).

2 HEAT repeats span residues 850–887 (EVRRLVLTLVLGALESPTPLLRCAASEAWARLAQVADD) and 1082–1119 (LLRRAVLACLRQLVQREAAEVSEHAIMLARDGRDAAAD). Positions 1646–1668 (RSAEVDDGASEKETLPEFGEGKD) are disordered. Position 1647 is a phosphoserine (serine 1647).

It belongs to the HEATR5 family.

This chain is HEAT repeat-containing protein 5A (Heatr5a), found in Mus musculus (Mouse).